The following is a 150-amino-acid chain: D-aminoacyl-tRNA deacylase (150 aa).

Residues 138-139 carry the Gly-cisPro motif, important for rejection of L-amino acids motif; the sequence is GP.

Belongs to the DTD family. In terms of assembly, homodimer.

It is found in the cytoplasm. The catalysed reaction is glycyl-tRNA(Ala) + H2O = tRNA(Ala) + glycine + H(+). The enzyme catalyses a D-aminoacyl-tRNA + H2O = a tRNA + a D-alpha-amino acid + H(+). Its function is as follows. An aminoacyl-tRNA editing enzyme that deacylates mischarged D-aminoacyl-tRNAs. Also deacylates mischarged glycyl-tRNA(Ala), protecting cells against glycine mischarging by AlaRS. Acts via tRNA-based rather than protein-based catalysis; rejects L-amino acids rather than detecting D-amino acids in the active site. By recycling D-aminoacyl-tRNA to D-amino acids and free tRNA molecules, this enzyme counteracts the toxicity associated with the formation of D-aminoacyl-tRNA entities in vivo and helps enforce protein L-homochirality. This chain is D-aminoacyl-tRNA deacylase, found in Petrotoga mobilis (strain DSM 10674 / SJ95).